The chain runs to 737 residues: ARMADILLO BTB ARABIDOPSIS PROTEIN 1 (737 aa).

ARM repeat units follow at residues 112–154, 165–212, 215–254, 257–296, 299–338, 341–380, 382–421, 456–495, and 497–536; these read DENV…KDCA, PGYQ…NIAH, PRIK…TVSF, DENK…NLVH, PDIK…QFAA, SDCK…RLAQ, AHNQ…GLAD, LKRL…HLCD, and KDGK…ELAK. A BTB domain is found at 568–635; sequence SDVTFLIDGK…IYSGRINIAK (68 aa).

As to quaternary structure, forms a heterodimeric complex with TCP24. Interacts with the origin recognition complex (preRC) components ORC1A, ORC1B, CDT1A and CDT1B. Interacts with DUF7/AIP1. Weakly expressed in the emerging lateral roots and mainly expressed in the shoot apex, young leaves and flower buds.

The protein localises to the nucleus. It participates in protein modification; protein ubiquitination. Its function is as follows. May act as a substrate-specific adapter of an E3 ubiquitin-protein ligase complex (CUL3-RBX1-BTB) which mediates the ubiquitination and subsequent proteasomal degradation of target proteins. In association with TCP24, exerts a negative role in cell proliferation in leaves, possibly by inhibiting mitotic DNA replication. The sequence is that of ARMADILLO BTB ARABIDOPSIS PROTEIN 1 (ABAP1) from Arabidopsis thaliana (Mouse-ear cress).